The following is a 104-amino-acid chain: NADH-quinone oxidoreductase subunit K (104 aa).

3 helical membrane passes run 4–24 (VPAS…LFGA), 31–51 (VIVL…LVAF), and 67–87 (LFTM…LIAL).

This sequence belongs to the complex I subunit 4L family. In terms of assembly, NDH-1 is composed of 14 different subunits. Subunits NuoA, H, J, K, L, M, N constitute the membrane sector of the complex.

Its subcellular location is the cell membrane. The enzyme catalyses a quinone + NADH + 5 H(+)(in) = a quinol + NAD(+) + 4 H(+)(out). In terms of biological role, NDH-1 shuttles electrons from NADH, via FMN and iron-sulfur (Fe-S) centers, to quinones in the respiratory chain. The immediate electron acceptor for the enzyme in this species is believed to be a menaquinone. Couples the redox reaction to proton translocation (for every two electrons transferred, four hydrogen ions are translocated across the cytoplasmic membrane), and thus conserves the redox energy in a proton gradient. This is NADH-quinone oxidoreductase subunit K from Bacillus cereus (strain AH820).